The sequence spans 804 residues: MIARWFWREWRSPSLLIVWLALSLAVACVLALGNISDRMEKGLSQQSREFMAGDRALRSSREVPQAWLEEAQKRGLKVGKQLTFATMTFAGDTPQLANVKAVDDIYPMYGDLQTNPPGLKPQAGSVLLAPRLMALLNLKTGDTIDVGDATLRIAGEVIQEPDSGFNPFQMAPRLMMNLADVDKTGAVQPGSRVTWRYKFGGNENQLDGYEKWLLPQLKPEQRWYGLEQDEGALGRSMERSQQFLLLSALLTLLLAVAAVAVAMNHYCRSRYDLVAILKTLGAGRAQLRKLIVGQWLMVLTLSAVTGGAIGLLFENVLMVLLKPVLPAALPPASLWPWLWALGTMTVISLLVGLRPYRLLLATQPLRVLRNDVVANVWPLKFYLPIVSVVVVLLLAGLMGGSMLLWAVLAGAVVLALLCGVLGWMLLNVLRRMTLKSLPLRLAVSRLLRQPWSTLSQLSAFSLSFMLLALLLVLRGDLLDRWQQQLPPESPNYFLINIATEQVAPLKAFLAEHQIVPESFYPVVRARLTAINDKPTEGNEDEALNRELNLTWQNTRPDHNPIVAGNWPPKADEVSMEEGLAKRLNVALGDTVTFMGDTQEFRAKVTSLRKVDWESLRPNFYFIFPEGALDGQPQSWLTSFRWENGNGMLTQLNRQFPTISLLDIGAILKQVGQVLEQVSRALEVMVVLVTACGMLLLLAQVQVGMRQRHQELVVWRTLGAGKKLLRTTLWCEFAMLGFVSGLVAAIGAETALAVLQAKVFDFPWEPDWRLWIVLPCSGALLLSLFGGWLGARLVKGKALFRQFAG.

A run of 10 helical transmembrane segments spans residues 15–35 (LLIVWLALSLAVACVLALGNI), 243–263 (FLLLSALLTLLLAVAAVAVAM), 301–321 (LSAVTGGAIGLLFENVLMVLL), 333–353 (SLWPWLWALGTMTVISLLVGL), 381–401 (FYLPIVSVVVVLLLAGLMGGS), 403–423 (LLWAVLAGAVVLALLCGVLGW), 453–473 (TLSQLSAFSLSFMLLALLLVL), 680–700 (ALEVMVVLVTACGMLLLLAQV), 734–754 (MLGFVSGLVAAIGAETALAVL), and 769–789 (LWIVLPCSGALLLSLFGGWLG).

It belongs to the ABC-4 integral membrane protein family.

The protein localises to the cell membrane. This is an uncharacterized protein from Escherichia coli (strain K12).